Here is a 492-residue protein sequence, read N- to C-terminus: Beta-glucosidase 38 (492 aa).

A signal peptide spans 1 to 21; the sequence is MNMPLLLLIAIVVVSLSHGNG. Q45 is a binding site for a beta-D-glucoside. N-linked (GlcNAc...) asparagine glycans are attached at residues N73 and N77. A beta-D-glucoside-binding positions include H146 and 191–192; that span reads NE. E192 functions as the Proton donor in the catalytic mechanism. A disulfide bond links C211 and C214. An N-linked (GlcNAc...) asparagine glycan is attached at N310. A beta-D-glucoside is bound at residue Y331. N341 is a glycosylation site (N-linked (GlcNAc...) asparagine). Residue E400 coordinates a beta-D-glucoside. The active-site Nucleophile is the E400. N408 carries an N-linked (GlcNAc...) asparagine glycan. A beta-D-glucoside is bound by residues W447, 454–455, and F463; that span reads EW.

Belongs to the glycosyl hydrolase 1 family.

It catalyses the reaction Hydrolysis of terminal, non-reducing beta-D-glucosyl residues with release of beta-D-glucose.. The sequence is that of Beta-glucosidase 38 (BGLU38) from Oryza sativa subsp. japonica (Rice).